The primary structure comprises 187 residues: Acireductone dioxygenase 4 (187 aa).

Residue A2 is modified to N-acetylalanine. Positions 89, 91, 95, and 134 each coordinate Fe(2+). The Ni(2+) site is built by H89, H91, E95, and H134.

Belongs to the acireductone dioxygenase (ARD) family. Fe(2+) serves as cofactor. The cofactor is Ni(2+).

The protein localises to the cytoplasm. It is found in the nucleus. The catalysed reaction is 1,2-dihydroxy-5-(methylsulfanyl)pent-1-en-3-one + O2 = 4-methylsulfanyl-2-oxobutanoate + formate + 2 H(+). It catalyses the reaction 1,2-dihydroxy-5-(methylsulfanyl)pent-1-en-3-one + O2 = 3-(methylsulfanyl)propanoate + CO + formate + 2 H(+). Its pathway is amino-acid biosynthesis; L-methionine biosynthesis via salvage pathway; L-methionine from S-methyl-5-thio-alpha-D-ribose 1-phosphate: step 5/6. Its function is as follows. Catalyzes 2 different reactions between oxygen and the acireductone 1,2-dihydroxy-3-keto-5-methylthiopentene (DHK-MTPene) depending upon the metal bound in the active site. Fe-containing acireductone dioxygenase (Fe-ARD) produces formate and 2-keto-4-methylthiobutyrate (KMTB), the alpha-ketoacid precursor of methionine in the methionine recycle pathway. Ni-containing acireductone dioxygenase (Ni-ARD) produces methylthiopropionate, carbon monoxide and formate, and does not lie on the methionine recycle pathway. The protein is Acireductone dioxygenase 4 (ARD4) of Arabidopsis thaliana (Mouse-ear cress).